The sequence spans 132 residues: Small ribosomal subunit protein uS8 (132 aa).

It belongs to the universal ribosomal protein uS8 family. Part of the 30S ribosomal subunit. Contacts proteins S5 and S12.

In terms of biological role, one of the primary rRNA binding proteins, it binds directly to 16S rRNA central domain where it helps coordinate assembly of the platform of the 30S subunit. This is Small ribosomal subunit protein uS8 (rpsH) from Caldanaerobacter subterraneus subsp. tengcongensis (strain DSM 15242 / JCM 11007 / NBRC 100824 / MB4) (Thermoanaerobacter tengcongensis).